A 271-amino-acid chain; its full sequence is Ribosomal RNA small subunit methyltransferase J (271 aa).

S-adenosyl-L-methionine contacts are provided by residues 116–117 (RD), 132–133 (ER), 168–169 (SS), and Asp-190.

Belongs to the methyltransferase superfamily. RsmJ family.

It is found in the cytoplasm. It catalyses the reaction guanosine(1516) in 16S rRNA + S-adenosyl-L-methionine = N(2)-methylguanosine(1516) in 16S rRNA + S-adenosyl-L-homocysteine + H(+). Functionally, specifically methylates the guanosine in position 1516 of 16S rRNA. The sequence is that of Ribosomal RNA small subunit methyltransferase J from Shewanella piezotolerans (strain WP3 / JCM 13877).